The following is a 453-amino-acid chain: Allantoinase (453 aa).

His59, His61, Lys146, His186, His242, and Asp315 together coordinate Zn(2+). Lys146 is subject to N6-carboxylysine.

Belongs to the metallo-dependent hydrolases superfamily. Allantoinase family. In terms of assembly, homotetramer. It depends on Zn(2+) as a cofactor. Post-translationally, carboxylation allows a single lysine to coordinate two zinc ions.

It carries out the reaction (S)-allantoin + H2O = allantoate + H(+). It functions in the pathway nitrogen metabolism; (S)-allantoin degradation; allantoate from (S)-allantoin: step 1/1. Its function is as follows. Catalyzes the conversion of allantoin (5-ureidohydantoin) to allantoic acid by hydrolytic cleavage of the five-member hydantoin ring. This Salmonella gallinarum (strain 287/91 / NCTC 13346) protein is Allantoinase.